We begin with the raw amino-acid sequence, 288 residues long: DegV domain-containing protein MYPU_3590 (288 aa).

The DegV domain occupies 3 to 275 (IAIVIDSSSG…LGAIAISLVK (273 aa)). Hexadecanoate-binding residues include Ser-61 and Ser-92.

In terms of biological role, may bind long-chain fatty acids, such as palmitate, and may play a role in lipid transport or fatty acid metabolism. The polypeptide is DegV domain-containing protein MYPU_3590 (Mycoplasmopsis pulmonis (strain UAB CTIP) (Mycoplasma pulmonis)).